The sequence spans 272 residues: 4-hydroxy-tetrahydrodipicolinate reductase (272 aa).

10–15 (GAAGRM) contributes to the NAD(+) binding site. Position 37 (Arg37) interacts with NADP(+). NAD(+) contacts are provided by residues 100-102 (GTT) and 124-127 (SGNM). His157 (proton donor/acceptor) is an active-site residue. Residue His158 coordinates (S)-2,3,4,5-tetrahydrodipicolinate. Lys161 acts as the Proton donor in catalysis. 167–168 (GT) serves as a coordination point for (S)-2,3,4,5-tetrahydrodipicolinate.

It belongs to the DapB family.

It is found in the cytoplasm. It carries out the reaction (S)-2,3,4,5-tetrahydrodipicolinate + NAD(+) + H2O = (2S,4S)-4-hydroxy-2,3,4,5-tetrahydrodipicolinate + NADH + H(+). It catalyses the reaction (S)-2,3,4,5-tetrahydrodipicolinate + NADP(+) + H2O = (2S,4S)-4-hydroxy-2,3,4,5-tetrahydrodipicolinate + NADPH + H(+). It participates in amino-acid biosynthesis; L-lysine biosynthesis via DAP pathway; (S)-tetrahydrodipicolinate from L-aspartate: step 4/4. Catalyzes the conversion of 4-hydroxy-tetrahydrodipicolinate (HTPA) to tetrahydrodipicolinate. This Methylocella silvestris (strain DSM 15510 / CIP 108128 / LMG 27833 / NCIMB 13906 / BL2) protein is 4-hydroxy-tetrahydrodipicolinate reductase.